A 228-amino-acid chain; its full sequence is Ribosomal RNA small subunit methyltransferase G (228 aa).

Residues G89, L94, 140-141, and R159 contribute to the S-adenosyl-L-methionine site; that span reads VE.

The protein belongs to the methyltransferase superfamily. RNA methyltransferase RsmG family.

Its subcellular location is the cytoplasm. It carries out the reaction guanosine(527) in 16S rRNA + S-adenosyl-L-methionine = N(7)-methylguanosine(527) in 16S rRNA + S-adenosyl-L-homocysteine. Its function is as follows. Specifically methylates the N7 position of guanine in position 527 of 16S rRNA. This Burkholderia ambifaria (strain ATCC BAA-244 / DSM 16087 / CCUG 44356 / LMG 19182 / AMMD) (Burkholderia cepacia (strain AMMD)) protein is Ribosomal RNA small subunit methyltransferase G.